A 247-amino-acid chain; its full sequence is Hydroxyacylglutathione hydrolase 1 (247 aa).

His-54, His-56, Asp-58, His-59, His-111, Asp-128, and His-165 together coordinate Zn(2+).

It belongs to the metallo-beta-lactamase superfamily. Glyoxalase II family. As to quaternary structure, monomer. Zn(2+) serves as cofactor.

The enzyme catalyses an S-(2-hydroxyacyl)glutathione + H2O = a 2-hydroxy carboxylate + glutathione + H(+). The protein operates within secondary metabolite metabolism; methylglyoxal degradation; (R)-lactate from methylglyoxal: step 2/2. Functionally, thiolesterase that catalyzes the hydrolysis of S-D-lactoyl-glutathione to form glutathione and D-lactic acid. The protein is Hydroxyacylglutathione hydrolase 1 of Vibrio vulnificus (strain YJ016).